The sequence spans 92 residues: Large ribosomal subunit protein bL28 (92 aa).

It belongs to the bacterial ribosomal protein bL28 family.

This is Large ribosomal subunit protein bL28 from Borrelia duttonii (strain Ly).